Reading from the N-terminus, the 382-residue chain is 2-heptyl-3-hydroxy-4(1H)-quinolone synthase (382 aa).

This sequence belongs to the 3-hydroxybenzoate 6-hydroxylase family.

It catalyses the reaction 2-heptyl-4(1H)-quinolone + NADH + O2 + H(+) = 2-heptyl-3-hydroxy-4(1H)-quinolone + NAD(+) + H2O. Its function is as follows. Involved in the terminal step of the biosynthesis of quinolone which in addition to serve as a potent signal for quorum sensing, chelates iron and promotes the formation of membrane vesicles (MVs). Catalyzes the hydroxylation of 2-heptyl-4-quinolone (C7-HHQ) to yield 2-heptyl-3-hydroxy-4-quinolone (PQS). PqsH is also able to hydroxylate HHQ analogs having alkyl side-chain lengths of 3 (C3-HHQ), 5 (C5-HHQ) and 9 (C9-HHQ) carbons, however catalytic efficiencies are significantly reduced for substrates with alkyl side-chain lengths below 7 carbons. This chain is 2-heptyl-3-hydroxy-4(1H)-quinolone synthase (pqsH), found in Pseudomonas aeruginosa (strain UCBPP-PA14).